A 405-amino-acid polypeptide reads, in one-letter code: MENIMTLPKIKQVRAWFTGGATAEKGAGGGDYHDQGANHWIDDHIATPMSKYRDYEQSRQSFGINVLGTLVVEVEAENGQTGFAVSTAGEMGCFIVEKHLNRFIEGKCVSDIKLIHDQMLNATLYYSGSGGLVMNTISCVDLALWDLFGKVVGLPVYKLLGGAVRDEIQFYATGARPDLAKEMGFIGGKMPTHWGPHDGDAGIRKDAAMVADMREKCGEDFWLMLDCWMSQDVNYATKLAHACAPYNLKWIEECLPPQQYEGYRELKRNAPVGMMVTSGEHHGTLQSFRTLSETGIDIMQPDVGWCGGLTTLVEIAAIAKSRGQLVVPHGSSVYSHHAVITFTNTPFSEFLMTSPDCSTMRPQFDPILLNEPVPVNGRIHKSVLDKPGFGVELNRDCNLKRPYSH.

Residues H33 and R59 each coordinate substrate. The Mg(2+) site is built by D226, E252, and E280. Catalysis depends on H329, which acts as the Proton acceptor. A substrate-binding site is contributed by E349.

It belongs to the mandelate racemase/muconate lactonizing enzyme family. RhamD subfamily. As to quaternary structure, homooctamer; tetramer of dimers. Requires Mg(2+) as cofactor.

The enzyme catalyses L-rhamnonate = 2-dehydro-3-deoxy-L-rhamnonate + H2O. Functionally, catalyzes the dehydration of L-rhamnonate to 2-keto-3-deoxy-L-rhamnonate (KDR). The polypeptide is L-rhamnonate dehydratase (Shigella boydii serotype 4 (strain Sb227)).